The sequence spans 476 residues: Protein transport protein Sec61 subunit alpha (476 aa).

Topologically, residues 2-33 (GIKFLEVIKPFCAVLPEIQKPERKIQFREKVL) are cytoplasmic. The helical transmembrane segment at 34–53 (WTAITLFIFLVCCQIPLFGI) threads the bilayer. Topologically, residues 54–76 (MSSDSADPFYWMRVILASNRGTL) are lumenal. The chain crosses the membrane as a helical span at residues 77-96 (MELGISPIVTSDLIMQLLAG). At 97-117 (AKIIEVGDSPKDRALFNGAQK) the chain is on the cytoplasmic side. Residues 118–138 (LFGMIITIGQAIVYVMTGMYG) form a helical membrane-spanning segment. Topologically, residues 139-144 (DPSEMG) are lumenal. A helical transmembrane segment spans residues 145-165 (AGICLVIIIQLFVAGLIVLLL). At 166–172 (DELLQKG) the chain is on the cytoplasmic side. The chain crosses the membrane as a helical span at residues 173-193 (YGLGSGISLLIATNICETIVW). The Lumenal portion of the chain corresponds to 194–240 (KAFSPTTVNTGRGTEFEGAIIALFHLLATRTDKVRALREAFYRQNLP). The chain crosses the membrane as a helical span at residues 241 to 261 (NLMNLIATVFVFAVVIYFQGF). Topologically, residues 262-288 (RVDLPIKSARYRGQYNTYPIKLFYTSN) are cytoplasmic. A helical transmembrane segment spans residues 289 to 309 (IPIILQSALVSNLYVISQMLS). The Lumenal segment spans residues 310–354 (TRFSGNFIVNLLGTWSDTSTGGPARAYPVGGLCYFLSPPESFGSV). The helical transmembrane segment at 355–375 (LDDPVHAAIYIVFMLGSCAFF) threads the bilayer. The Cytoplasmic portion of the chain corresponds to 376–420 (SKTWIEVSGSSAKDVAKQLKEQQMVMRGHRETSMVHELNRYIPTA). The helical transmembrane segment at 421–441 (AAFGGLCIGGLSVMADFLGAI) threads the bilayer. Topologically, residues 442–445 (GSGT) are lumenal. A helical membrane pass occupies residues 446-462 (GILLAVTIIYQYFEIFV). The Cytoplasmic segment spans residues 463-476 (KEQSEMGSMGGLFF).

It belongs to the SecY/SEC61-alpha family. As to quaternary structure, the SEC61 channel-forming translocon complex consists of channel-forming core components SEC61A1, SEC61B and SEC61G and different auxiliary components such as SEC62 and SEC63. The SEC61 channel associates with the multi-pass translocon (MPT) complex.

It is found in the endoplasmic reticulum membrane. Its function is as follows. Component of SEC61 channel-forming translocon complex that mediates transport of signal peptide-containing precursor polypeptides across the endoplasmic reticulum (ER). Forms a ribosome receptor and a gated pore in the ER membrane, both functions required for cotranslational translocation of nascent polypeptides. May cooperate with auxiliary protein SEC62, SEC63 and HSPA5/BiP to enable post-translational transport of small presecretory proteins. The SEC61 channel is also involved in ER membrane insertion of transmembrane proteins: it mediates membrane insertion of the first few transmembrane segments of proteins, while insertion of subsequent transmembrane regions of multi-pass membrane proteins is mediated by the multi-pass translocon (MPT) complex. In Boreogadus saida (Polar cod), this protein is Protein transport protein Sec61 subunit alpha (sec61a).